The chain runs to 107 residues: Pro-corazonin (107 aa).

Positions M1–C21 are cleaved as a signal peptide. Q22 carries the pyrrolidone carboxylic acid modification. An Asparagine amide modification is found at N32. A propeptide spanning residues S88–Y107 is cleaved from the precursor.

It belongs to the corazonin family. In terms of tissue distribution, in the adult brain, expressed in four neurons of the lateral protocerebrum project axons towards the retrocerebral complex.

It localises to the secreted. Cardioactive peptide. Corazonin is probably involved in the physiological regulation of the heart beat. The sequence is that of Pro-corazonin from Apis mellifera (Honeybee).